The chain runs to 391 residues: MTTINLGVPEVPAKSPLAPRRKSRQINVGGVLVGGGAPISVQSMTTTLTADVNATLQQIAELTAAGCDIVRVACPSQDDADALPIIAKKSPIPVIADIHFQPKYVFAAIEAGCAGVRVNPGNIKKFDDKVKEIAQAAKDHGTPIRIGVNAGSLDPRILQKYGKPTAEALVESALWEASLFEEHDFHDIKISVKHHDPMVMVQAYRLLAAQTDYPLHLGVTEAGPLLQGTIKSAVAFGILLSEGIGDTIRVSLSAPPVEEVKVGIGILESLGLRPRKLDIVSCPSCGRAQVDVYKLAEEVQAGLQGFPFPLRVAVMGCVVNGPGEAREADLGVASGNGKGQIFVRGEVIKTVPESQIVETLLEEAMRLAEEMQASGAFGDDQAVGAPIVTVQ.

[4Fe-4S] cluster is bound by residues Cys-282, Cys-285, Cys-317, and Glu-324.

It belongs to the IspG family. Requires [4Fe-4S] cluster as cofactor.

The enzyme catalyses (2E)-4-hydroxy-3-methylbut-2-enyl diphosphate + oxidized [flavodoxin] + H2O + 2 H(+) = 2-C-methyl-D-erythritol 2,4-cyclic diphosphate + reduced [flavodoxin]. It participates in isoprenoid biosynthesis; isopentenyl diphosphate biosynthesis via DXP pathway; isopentenyl diphosphate from 1-deoxy-D-xylulose 5-phosphate: step 5/6. Its function is as follows. Converts 2C-methyl-D-erythritol 2,4-cyclodiphosphate (ME-2,4cPP) into 1-hydroxy-2-methyl-2-(E)-butenyl 4-diphosphate. The protein is 4-hydroxy-3-methylbut-2-en-1-yl diphosphate synthase (flavodoxin) of Acidothermus cellulolyticus (strain ATCC 43068 / DSM 8971 / 11B).